The chain runs to 90 residues: UPF0237 protein NMA1909 (90 aa).

The ACT domain occupies 5–83 (VITVIGKDRV…LDIRMQNEEI (79 aa)).

It belongs to the UPF0237 family.

In Neisseria meningitidis serogroup A / serotype 4A (strain DSM 15465 / Z2491), this protein is UPF0237 protein NMA1909.